We begin with the raw amino-acid sequence, 1633 residues long: Laminin-like protein lam-2 (1633 aa).

The first 19 residues, 1 to 19 (MTSILWLFSLAVLWHMGQP), serve as a signal peptide directing secretion. A Laminin N-terminal domain is found at 47-286 (QPQRCVPDFV…AISDFAVGGR (240 aa)). N-linked (GlcNAc...) asparagine glycosylation is found at asparagine 116 and asparagine 136. 16 cysteine pairs are disulfide-bonded: cysteine 287–cysteine 296, cysteine 289–cysteine 310, cysteine 312–cysteine 321, cysteine 324–cysteine 344, cysteine 347–cysteine 356, cysteine 349–cysteine 372, cysteine 375–cysteine 384, cysteine 387–cysteine 400, cysteine 403–cysteine 415, cysteine 405–cysteine 421, cysteine 423–cysteine 432, cysteine 435–cysteine 447, cysteine 450–cysteine 464, cysteine 452–cysteine 471, cysteine 473–cysteine 482, and cysteine 485–cysteine 500. 4 consecutive Laminin EGF-like domains span residues 287-346 (CKCN…ECIA), 347-402 (CNCS…YCVA), 403-449 (CGCN…GCKN), and 450-502 (CGCE…GCTP). Asparagine 348 is a glycosylation site (N-linked (GlcNAc...) asparagine). The region spanning 503 to 512 (CFCFGHSSIC) is the Laminin EGF-like 5; first part domain. N-linked (GlcNAc...) asparagine glycosylation is found at asparagine 522, asparagine 658, and asparagine 740. The Laminin IV type A domain maps to 529–701 (QDKQKWAGQN…NPKQATWIEH (173 aa)). The Laminin EGF-like 5; second part domain occupies 702-747 (CECLPGFVGQFCESCESGFRRETKFGGPFNHCIKCDCHNHSNSCEA). Disulfide bonds link cysteine 736/cysteine 745, cysteine 738/cysteine 752, cysteine 754/cysteine 763, cysteine 766/cysteine 782, cysteine 785/cysteine 803, cysteine 806/cysteine 815, cysteine 818/cysteine 832, cysteine 835/cysteine 849, cysteine 837/cysteine 856, cysteine 859/cysteine 868, cysteine 871/cysteine 887, cysteine 890/cysteine 909, cysteine 892/cysteine 916, cysteine 918/cysteine 927, cysteine 930/cysteine 943, cysteine 946/cysteine 958, cysteine 948/cysteine 965, cysteine 967/cysteine 976, cysteine 979/cysteine 991, cysteine 994/cysteine 1006, cysteine 996/cysteine 1013, cysteine 1015/cysteine 1024, and cysteine 1027/cysteine 1038. A Laminin EGF-like 6; truncated domain is found at 752–784 (CICEHNTAGDTCERCARGYYGDALQGTEEDCQK). 5 consecutive Laminin EGF-like domains span residues 785–834 (CPCP…ECVE), 835–889 (CACS…NCQS), 890–945 (CGCF…GCQE), 946–993 (CNCD…GCQP), and 994–1040 (CDCE…GCLP). N-linked (GlcNAc...) asparagine glycosylation is present at asparagine 936. N-linked (GlcNAc...) asparagine glycosylation is found at asparagine 1077, asparagine 1183, asparagine 1226, asparagine 1259, asparagine 1336, asparagine 1452, and asparagine 1528.

During the formation of neuromuscular junctions at the larval stage, negatively regulates membrane protrusion from body wall muscles, probably downstream of the integrin complex formed by pat-2 and pat-3. This is Laminin-like protein lam-2 (lam-2) from Caenorhabditis elegans.